The primary structure comprises 867 residues: MNYPFQDIEQKWQKYWDHHQTFRTNTHSSKPKYYCLDMFPYPSGAGLHVGHPEGYTATDIISRLKRMEGYEVLHPMGWDAFGLPAERYAMTTGIHPRTTTKNNIDTFRRQIKSLGLSYDWEREISTTHPDYYRWTQWIFLQIYNSYFDRKQNKAVPITTLIQTLEREGSLFFEGVELPKGIQFTASEWKSKSRKEKEDILSHFRLVYEANIPVNWCEALGTVLANEEVEEWTSKGYSVERKPMRQYMMRITAYAERLLNDLSLCEWPPSTLEMQRNWIGKSEGLELSFHVPSLNKDITVYTTRPDTIFGATYLVLAPEHALVAELTTPEQTEAVGQYQKDCSLKSDLERTELNKDKTGVFTGAYAQLPTDPSVKVPIYISDYVLISYGTGAIMAVPAHDQRDYDFAVKFNLPIKQVIDGKMETNLAFDSKDSVCINSSSAEVQLDGKSYKDAFQTMVVWAEKKGIGRKKIQFKLRDWLFARQRYWGEPIPLVHFEDGSPKALSDSELPLVLPDLEEFKPSGTGESPLALAKDWLVYKDPETGEIGKRETNTMPQWAGSCYYYLRYIDPRNNDKLIDPELEKMWMPVEVYVGGAEHAVLHLLYSRFWHKILFDLGHVSTPEPFKKLVHQGLILGEDKGKMSKSRGNVVNPDDVVSEFGADTLRLFEMFMGPFEMSKPWSKNGVDGVFRFLNRVWRLFHSGENESFFVEDIEPNEAEQKTLHRTIKKVKDDIDSFSFNTAVSQMMIFINEFTSNPRKPKQVLEPFVLALSPFAPHLAEELWAKLGHTDSLAYHPYPKWDEKYLIDANITIVVQVNGKMRGEFLAPREIEEKEALSLAKEVEKAKPFWVGKEIKKEIYVKGKLVNIVVAG.

The short motif at 40–51 (PYPSGAGLHVGH) is the 'HIGH' region element. Positions 638–642 (KMSKS) match the 'KMSKS' region motif. An ATP-binding site is contributed by lysine 641.

The protein belongs to the class-I aminoacyl-tRNA synthetase family.

The protein localises to the cytoplasm. It carries out the reaction tRNA(Leu) + L-leucine + ATP = L-leucyl-tRNA(Leu) + AMP + diphosphate. This chain is Leucine--tRNA ligase, found in Leptospira biflexa serovar Patoc (strain Patoc 1 / Ames).